A 169-amino-acid polypeptide reads, in one-letter code: Peptide deformylase (169 aa).

C91 and H133 together coordinate Fe cation. Residue E134 is part of the active site. H137 contributes to the Fe cation binding site.

This sequence belongs to the polypeptide deformylase family. Requires Fe(2+) as cofactor.

The enzyme catalyses N-terminal N-formyl-L-methionyl-[peptide] + H2O = N-terminal L-methionyl-[peptide] + formate. Removes the formyl group from the N-terminal Met of newly synthesized proteins. Requires at least a dipeptide for an efficient rate of reaction. N-terminal L-methionine is a prerequisite for activity but the enzyme has broad specificity at other positions. The protein is Peptide deformylase of Haemophilus influenzae (strain ATCC 51907 / DSM 11121 / KW20 / Rd).